The primary structure comprises 418 residues: uncharacterized protein (418 aa).

Disordered regions lie at residues 123-174 (KVKD…DSDK), 209-231 (FDKEEKEREKEKEKEKEKEEKEE), 258-302 (KDDN…DEEL), and 344-418 (KDAD…YFKK). Over residues 136-154 (NKKDKKDKNKQNEEDHLII) the composition is skewed to basic and acidic residues. Acidic residues predominate over residues 156-170 (DVIDEEIQEKEDNES). The span at 209 to 227 (FDKEEKEREKEKEKEKEKE) shows a compositional bias: basic and acidic residues. Positions 266-293 (NQNQNQNQNNNNNNNNNNNNNNNNNNNN) are enriched in low complexity. Positions 344 to 356 (KDADDSDDFDEFN) are enriched in acidic residues. The span at 359–374 (DTESQLSKSKQKSPNV) shows a compositional bias: polar residues. The span at 375 to 390 (KKTTTTTTTSTSTSSR) shows a compositional bias: low complexity. Residues 391–401 (KQSKSKLKPKS) are compositionally biased toward basic residues.

This is an uncharacterized protein from Dictyostelium discoideum (Social amoeba).